An 80-amino-acid polypeptide reads, in one-letter code: Small ribosomal subunit protein uS17 (80 aa).

This sequence belongs to the universal ribosomal protein uS17 family. As to quaternary structure, part of the 30S ribosomal subunit.

In terms of biological role, one of the primary rRNA binding proteins, it binds specifically to the 5'-end of 16S ribosomal RNA. This Microcystis aeruginosa (strain NIES-843 / IAM M-2473) protein is Small ribosomal subunit protein uS17.